Here is a 560-residue protein sequence, read N- to C-terminus: 5'-nucleotidase (560 aa).

The N-terminal stretch at 1–21 (MNQRLIIKTALSAAILASLAG) is a signal peptide. Residue Cys-22 is the site of N-palmitoyl cysteine attachment. Residue Cys-22 is the site of S-diacylglycerol cysteine attachment. A divalent metal cation-binding residues include Asp-45, His-47, Asp-88, Asn-120, His-221, His-256, and Gln-258. Substrate contacts are provided by residues Phe-432 and 501–507 (YNASGGD).

This sequence belongs to the 5'-nucleotidase family. Requires chloride as cofactor. The cofactor is Mg(2+).

The protein resides in the cell outer membrane. It catalyses the reaction a ribonucleoside 5'-phosphate + H2O = a ribonucleoside + phosphate. Degradation of extracellular 5'-nucleotides for nutritional needs. The protein is 5'-nucleotidase (nutA) of Vibrio parahaemolyticus serotype O3:K6 (strain RIMD 2210633).